Reading from the N-terminus, the 321-residue chain is MTPASRPDWCLILLFLAVLRGESRYIQMREAAEDALFLLNSDFKRELSEGQIYRRSLRCIDMLSIEGQFTFQADRPQLHCALFLIGEPEEFIIIEYNFVNIDCIGGDILKVFDGWIIKGEKFPSSLDHPLSTMERYTDICEDGDVGSITRSSQNVAMIFFRVQQPGHGFTLTIRKIPNLFPCNVISQSMNGRFTMITPHQHRNCSFSIIYPVVIKIFDLTLGHFNELQLKKPPPKGCGDAGDFVELLGGAGLDPSKMFPLADLCHSFHGSAQMKIGCDNTVVRMVSSGNFINRVTFEYNQLDRQLEKKQGNSVEEACFPSD.

The signal sequence occupies residues 1 to 21 (MTPASRPDWCLILLFLAVLRG). 5 disulfide bridges follow: Cys59/Cys80, Cys103/Cys140, Cys182/Cys204, Cys237/Cys264, and Cys277/Cys317. N-linked (GlcNAc...) asparagine glycosylation is present at Asn203.

This sequence belongs to the CRF-binding protein family.

The protein resides in the secreted. In terms of biological role, binds CRF and inactivates it. May prevent inappropriate pituitary-adrenal stimulation in pregnancy. This Xenopus laevis (African clawed frog) protein is Corticotropin-releasing factor-binding protein (crhbp).